The following is a 123-amino-acid chain: Phosphoribosyl-AMP cyclohydrolase (123 aa).

Residue D73 coordinates Mg(2+). A Zn(2+)-binding site is contributed by C74. Positions 75 and 77 each coordinate Mg(2+). Zn(2+) contacts are provided by C90 and C97.

Belongs to the PRA-CH family. As to quaternary structure, homodimer. Mg(2+) is required as a cofactor. The cofactor is Zn(2+).

The protein localises to the cytoplasm. The catalysed reaction is 1-(5-phospho-beta-D-ribosyl)-5'-AMP + H2O = 1-(5-phospho-beta-D-ribosyl)-5-[(5-phospho-beta-D-ribosylamino)methylideneamino]imidazole-4-carboxamide. Its pathway is amino-acid biosynthesis; L-histidine biosynthesis; L-histidine from 5-phospho-alpha-D-ribose 1-diphosphate: step 3/9. Its function is as follows. Catalyzes the hydrolysis of the adenine ring of phosphoribosyl-AMP. This Methanoregula boonei (strain DSM 21154 / JCM 14090 / 6A8) protein is Phosphoribosyl-AMP cyclohydrolase.